The following is a 364-amino-acid chain: Peptide chain release factor 1 (364 aa).

At Q237 the chain carries N5-methylglutamine.

This sequence belongs to the prokaryotic/mitochondrial release factor family. Post-translationally, methylated by PrmC. Methylation increases the termination efficiency of RF1.

Its subcellular location is the cytoplasm. In terms of biological role, peptide chain release factor 1 directs the termination of translation in response to the peptide chain termination codons UAG and UAA. This chain is Peptide chain release factor 1, found in Mycoplasma mycoides subsp. mycoides SC (strain CCUG 32753 / NCTC 10114 / PG1).